Reading from the N-terminus, the 545-residue chain is MVVSLSFPEADPALSSPGAQQLHQDEAQVVVELTANDKPSLSWECPQGPGCGLQNTGNSCYLNAALQCLTHTPPLADYMLSQEYSQTCCSPEGCKMCAMEAHVTQSLLHSHSGDVMKPSQILTSAFHKHQQEDAHEFLMFTLETMHESCLQVHRQSEPTSEDSSPIHDIFGGLWRSQIKCLHCQGTSDTYDRFLDVPLDISSAQSVNQALWDTEKSEELRGENAYYCGRCRQKMPASKTLHIHSAPKVLLLVLKRFSAFMGNKLDRKVSYPEFLDLKPYLSQPTGGPLPYALYAVLVHEGATCHSGHYFSYVKAGHGKWYKMDDTKVTSCDVTSVLNENAYVLFYVQQTDLKEVSIDMPEGRIHEVLDPEYQLKKSRRKKHKKKSPCTEDVGEPSKNREKKATKETSLGEGKVLQEKNHKKAGQKHENTKLVPQEQNHQKLGQKHRNNEILPQEQNHQKTGQSLRNTEGELDLPADAIVIHLPRSIANWGRDTPDKVNQPWHNADRLLTSQDLVNTGQLCRQEGRRRSKKGKNKNKQGQKLLLVR.

One can recognise a USP domain in the interval 51 to 348 (CGLQNTGNSC…NAYVLFYVQQ (298 aa)). C60 acts as the Nucleophile in catalysis. Catalysis depends on H307, which acts as the Proton acceptor. Disordered regions lie at residues 367–443 (LDPE…KLGQ) and 521–545 (RQEGRRRSKKGKNKNKQGQKLLLVR). Basic residues predominate over residues 374–385 (KKSRRKKHKKKS). Residues 393–404 (EPSKNREKKATK) show a composition bias toward basic and acidic residues. Positions 524-537 (GRRRSKKGKNKNKQ) are enriched in basic residues.

It belongs to the peptidase C19 family. USP17 subfamily. In terms of tissue distribution, detected in T-cell, myeloid, and embryonic stem cell lines.

It localises to the nucleus. The protein localises to the endoplasmic reticulum. The catalysed reaction is Thiol-dependent hydrolysis of ester, thioester, amide, peptide and isopeptide bonds formed by the C-terminal Gly of ubiquitin (a 76-residue protein attached to proteins as an intracellular targeting signal).. Its function is as follows. Deubiquitinating enzyme that removes conjugated ubiquitin from specific proteins to regulate different cellular processes that may include cell proliferation, progression through the cell cycle, apoptosis, cell migration, and the cellular response to viral infection. This chain is Ubiquitin carboxyl-terminal hydrolase 17-like protein D, found in Mus musculus (Mouse).